Here is a 191-residue protein sequence, read N- to C-terminus: Thymidylate kinase (191 aa).

An ATP-binding site is contributed by 7-14 (GVDGAGKS).

This sequence belongs to the thymidylate kinase family.

It carries out the reaction dTMP + ATP = dTDP + ADP. In terms of biological role, phosphorylation of dTMP to form dTDP in both de novo and salvage pathways of dTTP synthesis. The polypeptide is Thymidylate kinase (Helicobacter pylori (strain Shi470)).